A 345-amino-acid chain; its full sequence is Serine proteinase inhibitor 2 (345 aa).

The protein belongs to the serpin family. Poxviruses subfamily.

Its subcellular location is the host cytoplasm. Its function is as follows. Viral serpin that inhibits both cysteine and serine proteinases involved in the regulation of host inflammatory and apoptosis processes. Major anti-apoptotic protein which inhibits both intrinsic and extrinsic pathways and strongly cleaves host CASP1 and CASP8 but is a rather poor inhibitor of host CASP3. Prevents the proteolytic activity of host interleukin-1-beta converting enzyme (ICE) and ICE-like enzymes. Can also block apoptosis through host tumor necrosis factor (TNF) receptor. The inhibition of host ICE is an example of a 'cross-class' interaction, in which a serpin inhibits a non-serine proteinase. Also inhibits granzyme B. In Vaccinia virus (strain Western Reserve) (VACV), this protein is Serine proteinase inhibitor 2 (OPG199).